The sequence spans 61 residues: Probable tautomerase SAV1363 (61 aa).

P2 serves as the catalytic Proton acceptor; via imino nitrogen.

Belongs to the 4-oxalocrotonate tautomerase family.

The protein is Probable tautomerase SAV1363 of Staphylococcus aureus (strain Mu50 / ATCC 700699).